The primary structure comprises 238 residues: Ubiquinone biosynthesis O-methyltransferase (238 aa).

Residues Arg-39, Gly-58, Asp-79, and Met-123 each coordinate S-adenosyl-L-methionine.

This sequence belongs to the methyltransferase superfamily. UbiG/COQ3 family.

The catalysed reaction is a 3-demethylubiquinol + S-adenosyl-L-methionine = a ubiquinol + S-adenosyl-L-homocysteine + H(+). The enzyme catalyses a 3-(all-trans-polyprenyl)benzene-1,2-diol + S-adenosyl-L-methionine = a 2-methoxy-6-(all-trans-polyprenyl)phenol + S-adenosyl-L-homocysteine + H(+). It participates in cofactor biosynthesis; ubiquinone biosynthesis. O-methyltransferase that catalyzes the 2 O-methylation steps in the ubiquinone biosynthetic pathway. The chain is Ubiquinone biosynthesis O-methyltransferase from Hahella chejuensis (strain KCTC 2396).